We begin with the raw amino-acid sequence, 101 residues long: NADH-quinone oxidoreductase subunit K (101 aa).

The next 3 helical transmembrane spans lie at 4-24, 30-50, and 61-81; these read LGYF…GIII, IVLL…FIAF, and IFVF…LAIL.

The protein belongs to the complex I subunit 4L family. In terms of assembly, NDH-1 is composed of 14 different subunits. Subunits NuoA, H, J, K, L, M, N constitute the membrane sector of the complex.

The protein resides in the cell inner membrane. The catalysed reaction is a quinone + NADH + 5 H(+)(in) = a quinol + NAD(+) + 4 H(+)(out). NDH-1 shuttles electrons from NADH, via FMN and iron-sulfur (Fe-S) centers, to quinones in the respiratory chain. The immediate electron acceptor for the enzyme in this species is believed to be ubiquinone. Couples the redox reaction to proton translocation (for every two electrons transferred, four hydrogen ions are translocated across the cytoplasmic membrane), and thus conserves the redox energy in a proton gradient. This is NADH-quinone oxidoreductase subunit K from Coxiella burnetii (strain CbuG_Q212) (Coxiella burnetii (strain Q212)).